The chain runs to 275 residues: Uronate dehydrogenase (275 aa).

Residues 22–23 (GL), 42–44 (DIA), 60–61 (DL), and 80–84 (FGGVS) each bind NAD(+). Residues Ser-84 and 120-122 (SNH) contribute to the substrate site. Tyr-145 serves as the catalytic Proton acceptor. Lys-149 is an NAD(+) binding site. Position 174 (Ser-174) interacts with substrate. An NAD(+)-binding site is contributed by Ser-175. A substrate-binding site is contributed by Arg-183.

The protein belongs to the NAD(P)-dependent epimerase/dehydratase family. In terms of assembly, homohexamer.

It catalyses the reaction beta-D-galacturonate + NAD(+) = D-galactaro-1,5-lactone + NADH + H(+). It carries out the reaction beta-D-glucuronate + NAD(+) = D-glucaro-1,5-lactone + NADH + H(+). The protein operates within carbohydrate acid metabolism; D-galacturonate degradation via prokaryotic oxidative pathway. In terms of biological role, catalyzes the oxidation of beta-D-galacturonate and beta-D-glucuronate to galactarate and D-glucarate, respectively. Cannot use NADP(+) instead of NAD(+) as cosubstrate. The protein is Uronate dehydrogenase (udh) of Pseudomonas syringae pv. tomato (strain ATCC BAA-871 / DC3000).